We begin with the raw amino-acid sequence, 151 residues long: uncharacterized protein (151 aa).

Positions 1-77 (MSLLGGMWKS…LGSNPISSSR (77 aa)) are disordered. 2 stretches are compositionally biased toward low complexity: residues 19-54 (PKPSSNPLRSSGLNSGMSSRLNSKSSLRSGHSRSSN) and 63-76 (SISGSLGSNPISSS).

This is an uncharacterized protein from Methanothermobacter marburgensis (strain ATCC BAA-927 / DSM 2133 / JCM 14651 / NBRC 100331 / OCM 82 / Marburg) (Methanobacterium thermoautotrophicum).